Reading from the N-terminus, the 219-residue chain is Urease accessory protein UreG (219 aa).

Residues 1 to 20 are disordered; the sequence is MSALHSIPHRSKKLPPLRVG. 23–30 is a GTP binding site; sequence GPVGSGKT.

It belongs to the SIMIBI class G3E GTPase family. UreG subfamily. As to quaternary structure, homodimer. UreD, UreF and UreG form a complex that acts as a GTP-hydrolysis-dependent molecular chaperone, activating the urease apoprotein by helping to assemble the nickel containing metallocenter of UreC. The UreE protein probably delivers the nickel.

The protein resides in the cytoplasm. In terms of biological role, facilitates the functional incorporation of the urease nickel metallocenter. This process requires GTP hydrolysis, probably effectuated by UreG. The sequence is that of Urease accessory protein UreG from Methylibium petroleiphilum (strain ATCC BAA-1232 / LMG 22953 / PM1).